Here is a 613-residue protein sequence, read N- to C-terminus: Alkyldihydroxyacetonephosphate synthase (613 aa).

Residues 126–307 (IDRPPDAVIL…TEAVVKIERL (182 aa)) enclose the FAD-binding PCMH-type domain. FAD-binding positions include 158–164 (PFGGGTN), 228–234 (DSYAYST), 241–244 (ARGS), and 291–297 (EGAFGLV). Position 437 (Arg437) interacts with substrate. Catalysis depends on Tyr498, which acts as the Proton donor/acceptor. An important for enzyme activity region spans residues 534–536 (HHH). The segment at 572-593 (NPGKLLPSPPSEKETPKATQAR) is disordered. Residues 611–613 (AHL) carry the Microbody targeting signal motif.

Belongs to the FAD-binding oxidoreductase/transferase type 4 family. As to quaternary structure, homodimer. The cofactor is FAD.

It localises to the peroxisome. The enzyme catalyses a long chain fatty alcohol + a 1-acylglycerone 3-phosphate = a 1-O-alkylglycerone 3-phosphate + a long-chain fatty acid + H(+). Its pathway is glycerolipid metabolism; ether lipid biosynthesis. In terms of biological role, catalyzes the exchange of an acyl for a long-chain alkyl group and the formation of the ether bond in the biosynthesis of ether phospholipids. The protein is Alkyldihydroxyacetonephosphate synthase of Trypanosoma brucei brucei.